The chain runs to 565 residues: Beta-hexosaminidase subunit beta (565 aa).

An N-terminal signal peptide occupies residues 1 to 13 (MIVLLLLISYCFA). N71 carries an N-linked (GlcNAc...) asparagine glycan. The Proton donor role is filled by E347.

It belongs to the glycosyl hydrolase 20 family. Heterodimer of one alpha subunit and one beta subunit. Post-translationally, glycosylated.

It is found in the cytoplasmic granule. It localises to the secreted. The enzyme catalyses Hydrolysis of terminal non-reducing N-acetyl-D-hexosamine residues in N-acetyl-beta-D-hexosaminides.. Hydrolyzes the non-reducing end N-acetyl-D-hexosamine and/or sulfated N-acetyl-D-hexosamine of glycoconjugates. May contribute to amoebic pathogenicity and may be involved in the destruction of extracellular matrix components. The chain is Beta-hexosaminidase subunit beta from Entamoeba histolytica (strain ATCC 30459 / HM-1:IMSS / ABRM).